The sequence spans 154 residues: Small ribosomal subunit protein uS15 (154 aa).

Over residues 1 to 11 (MSRLHAHKRYH) the composition is skewed to basic residues. A disordered region spans residues 1 to 24 (MSRLHAHKRYHGQSGSKRPLRTTK).

Belongs to the universal ribosomal protein uS15 family. As to quaternary structure, part of the 30S ribosomal subunit.

The protein is Small ribosomal subunit protein uS15 of Nanoarchaeum equitans (strain Kin4-M).